The chain runs to 300 residues: UDP-3-O-acyl-N-acetylglucosamine deacetylase (300 aa).

Residues His78, His237, and Asp241 each coordinate Zn(2+). The Proton donor role is filled by His264.

The protein belongs to the LpxC family. Zn(2+) serves as cofactor.

It catalyses the reaction a UDP-3-O-[(3R)-3-hydroxyacyl]-N-acetyl-alpha-D-glucosamine + H2O = a UDP-3-O-[(3R)-3-hydroxyacyl]-alpha-D-glucosamine + acetate. Its pathway is glycolipid biosynthesis; lipid IV(A) biosynthesis; lipid IV(A) from (3R)-3-hydroxytetradecanoyl-[acyl-carrier-protein] and UDP-N-acetyl-alpha-D-glucosamine: step 2/6. In terms of biological role, catalyzes the hydrolysis of UDP-3-O-myristoyl-N-acetylglucosamine to form UDP-3-O-myristoylglucosamine and acetate, the committed step in lipid A biosynthesis. The polypeptide is UDP-3-O-acyl-N-acetylglucosamine deacetylase (Acinetobacter baumannii (strain ATCC 17978 / DSM 105126 / CIP 53.77 / LMG 1025 / NCDC KC755 / 5377)).